Here is a 20-residue protein sequence, read N- to C-terminus: Non-specific lipid-transfer protein (20 aa).

This sequence belongs to the plant LTP family. As to expression, leaf.

Its function is as follows. Plant non-specific lipid-transfer proteins transfer phospholipids as well as galactolipids across membranes. May play a role in wax or cutin deposition in the cell walls of expanding epidermal cells and certain secretory tissues. The polypeptide is Non-specific lipid-transfer protein (Cannabis sativa (Hemp)).